We begin with the raw amino-acid sequence, 293 residues long: GDT1-like protein 3 (293 aa).

Residues 1–25 form the signal peptide; the sequence is MGLISNPTRLILVATIFFLVSSISG. The next 6 membrane-spanning stretches (helical) occupy residues 89-109, 115-135, 148-168, 200-220, 238-258, and 272-292; these read FSMI…ALMA, ATVL…STGL, TNSA…YIAW, LFSR…FLAE, AIGV…LAVV, and VATV…FYPP.

This sequence belongs to the GDT1 family.

The protein localises to the membrane. The sequence is that of GDT1-like protein 3 from Arabidopsis thaliana (Mouse-ear cress).